A 797-amino-acid chain; its full sequence is Xaa-Pro dipeptidyl-peptidase (797 aa).

Residues Ser-370, Asp-490, and His-521 each act as charge relay system in the active site.

The protein belongs to the peptidase S15 family. As to quaternary structure, homodimer.

Its subcellular location is the cytoplasm. It carries out the reaction Hydrolyzes Xaa-Pro-|- bonds to release unblocked, N-terminal dipeptides from substrates including Ala-Pro-|-p-nitroanilide and (sequentially) Tyr-Pro-|-Phe-Pro-|-Gly-Pro-|-Ile.. Its function is as follows. Removes N-terminal dipeptides sequentially from polypeptides having unsubstituted N-termini provided that the penultimate residue is proline. This Lacticaseibacillus rhamnosus (Lactobacillus rhamnosus) protein is Xaa-Pro dipeptidyl-peptidase.